A 358-amino-acid chain; its full sequence is Peptide chain release factor 1 (358 aa).

Gln-233 is subject to N5-methylglutamine.

Belongs to the prokaryotic/mitochondrial release factor family. Post-translationally, methylated by PrmC. Methylation increases the termination efficiency of RF1.

The protein resides in the cytoplasm. Functionally, peptide chain release factor 1 directs the termination of translation in response to the peptide chain termination codons UAG and UAA. The sequence is that of Peptide chain release factor 1 from Beijerinckia indica subsp. indica (strain ATCC 9039 / DSM 1715 / NCIMB 8712).